The primary structure comprises 428 residues: Enolase (428 aa).

Q173 lines the (2R)-2-phosphoglycerate pocket. The Proton donor role is filled by E217. Mg(2+)-binding residues include D253, E294, and D320. 4 residues coordinate (2R)-2-phosphoglycerate: K345, R374, S375, and K396. K345 (proton acceptor) is an active-site residue.

It belongs to the enolase family. It depends on Mg(2+) as a cofactor.

Its subcellular location is the cytoplasm. The protein localises to the secreted. It is found in the cell surface. The enzyme catalyses (2R)-2-phosphoglycerate = phosphoenolpyruvate + H2O. It participates in carbohydrate degradation; glycolysis; pyruvate from D-glyceraldehyde 3-phosphate: step 4/5. Functionally, catalyzes the reversible conversion of 2-phosphoglycerate (2-PG) into phosphoenolpyruvate (PEP). It is essential for the degradation of carbohydrates via glycolysis. This chain is Enolase, found in Methanosarcina mazei (strain ATCC BAA-159 / DSM 3647 / Goe1 / Go1 / JCM 11833 / OCM 88) (Methanosarcina frisia).